Here is a 363-residue protein sequence, read N- to C-terminus: Holliday junction branch migration complex subunit RuvB (363 aa).

The tract at residues 1–32 is disordered; the sequence is MAIQTDSFAAAPAPSSGSTRRLISAAPTSPNE. Over residues 7–18 the composition is skewed to low complexity; it reads SFAAAPAPSSGS. Residues 13 to 200 are large ATPase domain (RuvB-L); that stretch reads APSSGSTRRL…FGIVARLEFY (188 aa). Residues leucine 39, arginine 40, glycine 81, lysine 84, threonine 85, threonine 86, 147 to 149, arginine 190, tyrosine 200, and arginine 237 contribute to the ATP site; that span reads EDY. Threonine 85 provides a ligand contact to Mg(2+). The small ATPAse domain (RuvB-S) stretch occupies residues 201–271; it reads TPEELVRIVT…IAELALTMLD (71 aa). Positions 274 to 363 are head domain (RuvB-H); that stretch reads PRGFDVMDRK…GPVGSDLFEG (90 aa). Positions 329 and 334 each coordinate DNA.

The protein belongs to the RuvB family. Homohexamer. Forms an RuvA(8)-RuvB(12)-Holliday junction (HJ) complex. HJ DNA is sandwiched between 2 RuvA tetramers; dsDNA enters through RuvA and exits via RuvB. An RuvB hexamer assembles on each DNA strand where it exits the tetramer. Each RuvB hexamer is contacted by two RuvA subunits (via domain III) on 2 adjacent RuvB subunits; this complex drives branch migration. In the full resolvosome a probable DNA-RuvA(4)-RuvB(12)-RuvC(2) complex forms which resolves the HJ.

The protein resides in the cytoplasm. It carries out the reaction ATP + H2O = ADP + phosphate + H(+). Its function is as follows. The RuvA-RuvB-RuvC complex processes Holliday junction (HJ) DNA during genetic recombination and DNA repair, while the RuvA-RuvB complex plays an important role in the rescue of blocked DNA replication forks via replication fork reversal (RFR). RuvA specifically binds to HJ cruciform DNA, conferring on it an open structure. The RuvB hexamer acts as an ATP-dependent pump, pulling dsDNA into and through the RuvAB complex. RuvB forms 2 homohexamers on either side of HJ DNA bound by 1 or 2 RuvA tetramers; 4 subunits per hexamer contact DNA at a time. Coordinated motions by a converter formed by DNA-disengaged RuvB subunits stimulates ATP hydrolysis and nucleotide exchange. Immobilization of the converter enables RuvB to convert the ATP-contained energy into a lever motion, pulling 2 nucleotides of DNA out of the RuvA tetramer per ATP hydrolyzed, thus driving DNA branch migration. The RuvB motors rotate together with the DNA substrate, which together with the progressing nucleotide cycle form the mechanistic basis for DNA recombination by continuous HJ branch migration. Branch migration allows RuvC to scan DNA until it finds its consensus sequence, where it cleaves and resolves cruciform DNA. In Leptothrix cholodnii (strain ATCC 51168 / LMG 8142 / SP-6) (Leptothrix discophora (strain SP-6)), this protein is Holliday junction branch migration complex subunit RuvB.